We begin with the raw amino-acid sequence, 684 residues long: G-protein-signaling modulator 2 (684 aa).

The segment at 22-357 is important for interaction with NUMA1; INSC and FRMPD1; it reads ASCLELALEG…HLEISREVGD (336 aa). TPR repeat units lie at residues 24-57, 62-95, 102-135, 142-184, 202-235, 242-275, 282-315, and 322-355; these read CLEL…GTED, SAIY…ARTI, AKAS…SREL, ARAL…AVDF, GRAF…AKEF, RRAY…ARQL, AQSC…AQEL, and GRAC…SREV. S132 bears the Phosphoserine; by PKG mark. Phosphoserine; by PKG is present on S352. Phosphoserine occurs at positions 408 and 483. Residue T486 is modified to Phosphothreonine. One can recognise a GoLoco 1 domain in the interval 489–511; that stretch reads DEGFFDLLSRFQSNRMDDQRCCL. S501 carries the phosphoserine; by PKC modification. S541 and S565 each carry phosphoserine. 3 consecutive GoLoco domains span residues 544 to 566, 594 to 616, and 628 to 650; these read TDEF…RASF, DEDF…RCAP, and DEDF…RVLL. S607 bears the Phosphoserine; by PKG mark. Residues R608, R613, R642, and R647 each contribute to the GDP site.

It belongs to the GPSM family. As to quaternary structure, interacts with the dynein-dynactin complex; this interaction is inhibited in a PLK1-dependent manner. Part of a spindle orientation complex at least composed of GNAI1, GPSM2 and NUMA1. Interacts with LLGL2. Interacts (via TPR repeat region) with INSC/inscuteable. Interacts (via TPR repeat region) with NUMA1 (via C-terminus); this interaction is direct, inhibited in a PLK1-dependent manner, prevents the binding of NUMA1 with SPAG5 and promotes spindle pole organization. INSC and NUMA1 compete for the same binding site, but INSC has higher affinity and can displace NUMA1 (in vitro). Interacts with GNAI2. Interacts (via GoLoco domains) with the GDP-bound form of GNAI1 and GNAI3; has much lower affinity for the GTP-bound form. Interaction with GDP-bound GNAI3 strongly enhances the affinity for NUMA1. Interacts (via TPR repeat region) with FRMPD1. INSC and FRMPD1 compete for the same binding site, but INSC has higher affinity and can displace FRMPD1 (in vitro). Interacts (via TPR repeat region) with FRMPD4. Identified in a complex with INSC and F2RL2/Par3. Interacts with TASOR. Ubiquitously expressed.

It localises to the cytoplasm. It is found in the cell cortex. The protein localises to the cytoskeleton. Its subcellular location is the spindle pole. The protein resides in the lateral cell membrane. Plays an important role in mitotic spindle pole organization via its interaction with NUMA1. Required for cortical dynein-dynactin complex recruitment during metaphase. Plays a role in metaphase spindle orientation. Also plays an important role in asymmetric cell divisions. Has guanine nucleotide dissociation inhibitor (GDI) activity towards G(i) alpha proteins, such as GNAI1 and GNAI3, and thereby regulates their activity. The chain is G-protein-signaling modulator 2 (GPSM2) from Homo sapiens (Human).